The chain runs to 340 residues: uncharacterized protein (340 aa).

This is an uncharacterized protein from Enterobacteria phage T4 (Bacteriophage T4).